The primary structure comprises 569 residues: uncharacterized protein (569 aa).

Residues 1-22 form the signal peptide; the sequence is MSLLVKAALILKCASMLQGVSA. Residues 498 to 541 form a disordered region; sequence RETSILDSTNTTSTNATNTTTTTSSSSTASSSASASSSTSATSG. The segment covering 505–540 has biased composition (low complexity); that stretch reads STNTTSTNATNTTTTTSSSSTASSSASASSSTSATS.

The protein localises to the secreted. It localises to the cell surface. This is an uncharacterized protein from Schizosaccharomyces pombe (strain 972 / ATCC 24843) (Fission yeast).